Reading from the N-terminus, the 146-residue chain is Large ribosomal subunit protein uL15 (146 aa).

Residues 1–53 (MILSNLKPVPGARHSKKRLGRGPGSGTGKTSGKGHKGQKARSGGGVRPGFEGG) are disordered. Composition is skewed to gly residues over residues 21–31 (RGPGSGTGKTS) and 42–52 (SGGGVRPGFEG).

It belongs to the universal ribosomal protein uL15 family. Part of the 50S ribosomal subunit.

In terms of biological role, binds to the 23S rRNA. The chain is Large ribosomal subunit protein uL15 from Acholeplasma laidlawii (strain PG-8A).